The following is a 578-amino-acid chain: Aspartate--tRNA ligase (578 aa).

Glu-169 contacts L-aspartate. The tract at residues 191–194 (QTFK) is aspartate. Position 213 (Arg-213) interacts with L-aspartate. Residues 213–215 (RDE) and Gln-222 each bind ATP. His-440 contributes to the L-aspartate binding site. Position 474 (Glu-474) interacts with ATP. Arg-481 is an L-aspartate binding site. An ATP-binding site is contributed by 526–529 (GLDR).

It belongs to the class-II aminoacyl-tRNA synthetase family. Type 1 subfamily. In terms of assembly, homodimer.

The protein localises to the cytoplasm. The enzyme catalyses tRNA(Asp) + L-aspartate + ATP = L-aspartyl-tRNA(Asp) + AMP + diphosphate. Catalyzes the attachment of L-aspartate to tRNA(Asp) in a two-step reaction: L-aspartate is first activated by ATP to form Asp-AMP and then transferred to the acceptor end of tRNA(Asp). In Ureaplasma parvum serovar 3 (strain ATCC 700970), this protein is Aspartate--tRNA ligase.